The sequence spans 212 residues: Methylthioribulose-1-phosphate dehydratase (212 aa).

His97 and His99 together coordinate Zn(2+).

It belongs to the aldolase class II family. MtnB subfamily. In terms of assembly, homotetramer. Zn(2+) serves as cofactor.

It catalyses the reaction 5-(methylsulfanyl)-D-ribulose 1-phosphate = 5-methylsulfanyl-2,3-dioxopentyl phosphate + H2O. Its pathway is amino-acid biosynthesis; L-methionine biosynthesis via salvage pathway; L-methionine from S-methyl-5-thio-alpha-D-ribose 1-phosphate: step 2/6. Functionally, catalyzes the dehydration of methylthioribulose-1-phosphate (MTRu-1-P) into 2,3-diketo-5-methylthiopentyl-1-phosphate (DK-MTP-1-P). The chain is Methylthioribulose-1-phosphate dehydratase from Bacillus thuringiensis (strain Al Hakam).